Consider the following 435-residue polypeptide: Aspartate aminotransferase (435 aa).

Residues Tyr69 and Ser100 to Leu101 each bind pyridoxal 5'-phosphate. Tyr139 to Arg141 lines the substrate pocket. Pyridoxal 5'-phosphate is bound by residues Asn189, Tyr221, and Ser254 to Ser256. Substrate is bound at residue Arg392.

It belongs to the class-I pyridoxal-phosphate-dependent aminotransferase family. Pyridoxal 5'-phosphate is required as a cofactor.

The enzyme catalyses L-aspartate + 2-oxoglutarate = oxaloacetate + L-glutamate. Functionally, main aspartate aminotransferase that couples nitrogen assimilation to aspartate synthesis. Has a weak, but significant, side activity toward kynurenine (Kyn). Oxaloacetate and 2-oxoglutarate, but not pyruvate, serve as amino acceptors, while Asp, Glu and Kyn serve as the best amino donors. Essential for axenic growth and survival of M.tuberculosis in macrophages and in mice. The protein is Aspartate aminotransferase of Mycobacterium tuberculosis (strain ATCC 25618 / H37Rv).